Consider the following 274-residue polypeptide: Ribosomal RNA small subunit methyltransferase A (274 aa).

His-15, Leu-17, Gly-42, Glu-64, Asp-89, and Asn-108 together coordinate S-adenosyl-L-methionine.

Belongs to the class I-like SAM-binding methyltransferase superfamily. rRNA adenine N(6)-methyltransferase family. RsmA subfamily.

The protein resides in the cytoplasm. It catalyses the reaction adenosine(1518)/adenosine(1519) in 16S rRNA + 4 S-adenosyl-L-methionine = N(6)-dimethyladenosine(1518)/N(6)-dimethyladenosine(1519) in 16S rRNA + 4 S-adenosyl-L-homocysteine + 4 H(+). In terms of biological role, specifically dimethylates two adjacent adenosines (A1518 and A1519) in the loop of a conserved hairpin near the 3'-end of 16S rRNA in the 30S particle. May play a critical role in biogenesis of 30S subunits. In Prochlorococcus marinus (strain MIT 9301), this protein is Ribosomal RNA small subunit methyltransferase A.